A 251-amino-acid polypeptide reads, in one-letter code: Aquaporin (251 aa).

Topologically, residues 1-11 (MAGETLRKIQS) are cytoplasmic. The chain crosses the membrane as a helical span at residues 12–32 (LLGEMVASFIFGFAVYSAILG). Over 33-42 (STIAQQPAAK) the chain is Extracellular. The chain crosses the membrane as a helical span at residues 43–63 (VIIGLTVGFSAIGIIYSFSDV). The Cytoplasmic segment spans residues 64–86 (TIAHFNPAITLAAILTGKMGILC). Residues 69 to 71 (NPA) carry the NPA motif. The helical transmembrane segment at 87 to 107 (GLGYMLAQCVGFILAVCALLV) threads the bilayer. The Extracellular portion of the chain corresponds to 108–133 (CSPVGYKETLNVIRPAPAPFGADNLN). Residues 134 to 154 (VFFTEFFLTAILVHIAFAVAV) traverse the membrane as a helical segment. Residues 155-179 (NPYRPKVDTDGKFVDPDEKEPVDRR) lie on the Cytoplasmic side of the membrane. A helical membrane pass occupies residues 180-200 (ITAPLCIGLTLGFLAFMGLVT). At 201–224 (SGGAFNPGLTLAPVIMSNTWQHFW) the chain is on the extracellular side. Residues 206-208 (NPG) carry the NPG motif. A helical transmembrane segment spans residues 225 to 245 (LYLGAQYLGGLVGGLLQVFVL). Residues 246–251 (YKLSSN) are Cytoplasmic-facing.

This sequence belongs to the MIP/aquaporin (TC 1.A.8) family.

The protein localises to the cell membrane. In terms of biological role, water channel required to facilitate the transport of water across membranes. Involved in osmotolerance. The chain is Aquaporin (AQP) from Encephalitozoon hellem (Microsporidian parasite).